The sequence spans 332 residues: CRISPR-associated endonuclease Cas1 3 (332 aa).

Mn(2+) is bound by residues E159, H224, and E239.

The protein belongs to the CRISPR-associated endonuclease Cas1 family. As to quaternary structure, homodimer, forms a heterotetramer with a Cas2 homodimer. Requires Mg(2+) as cofactor. Mn(2+) is required as a cofactor.

Its function is as follows. CRISPR (clustered regularly interspaced short palindromic repeat), is an adaptive immune system that provides protection against mobile genetic elements (viruses, transposable elements and conjugative plasmids). CRISPR clusters contain spacers, sequences complementary to antecedent mobile elements, and target invading nucleic acids. CRISPR clusters are transcribed and processed into CRISPR RNA (crRNA). Acts as a dsDNA endonuclease. Involved in the integration of spacer DNA into the CRISPR cassette. The protein is CRISPR-associated endonuclease Cas1 3 of Thermus thermophilus (strain ATCC 27634 / DSM 579 / HB8).